Reading from the N-terminus, the 282-residue chain is Bifunctional protein FolD (282 aa).

NADP(+) contacts are provided by residues 162–164 (GRS), Ser187, and Val228.

The protein belongs to the tetrahydrofolate dehydrogenase/cyclohydrolase family. Homodimer.

The enzyme catalyses (6R)-5,10-methylene-5,6,7,8-tetrahydrofolate + NADP(+) = (6R)-5,10-methenyltetrahydrofolate + NADPH. It catalyses the reaction (6R)-5,10-methenyltetrahydrofolate + H2O = (6R)-10-formyltetrahydrofolate + H(+). It functions in the pathway one-carbon metabolism; tetrahydrofolate interconversion. Functionally, catalyzes the oxidation of 5,10-methylenetetrahydrofolate to 5,10-methenyltetrahydrofolate and then the hydrolysis of 5,10-methenyltetrahydrofolate to 10-formyltetrahydrofolate. This is Bifunctional protein FolD from Thermus thermophilus (strain ATCC BAA-163 / DSM 7039 / HB27).